A 221-amino-acid chain; its full sequence is Probable septum site-determining protein MinC (221 aa).

This sequence belongs to the MinC family. In terms of assembly, interacts with MinD and FtsZ.

Cell division inhibitor that blocks the formation of polar Z ring septums. Rapidly oscillates between the poles of the cell to destabilize FtsZ filaments that have formed before they mature into polar Z rings. Prevents FtsZ polymerization. The polypeptide is Probable septum site-determining protein MinC (Prochlorococcus marinus (strain SARG / CCMP1375 / SS120)).